Consider the following 179-residue polypeptide: Ribosome maturation factor RimM (179 aa).

The 73-residue stretch at 98–170 (PDEFWDRRLR…RIVVSGIPGL (73 aa)) folds into the PRC barrel domain.

The protein belongs to the RimM family. Binds ribosomal protein uS19.

Its subcellular location is the cytoplasm. Functionally, an accessory protein needed during the final step in the assembly of 30S ribosomal subunit, possibly for assembly of the head region. Essential for efficient processing of 16S rRNA. May be needed both before and after RbfA during the maturation of 16S rRNA. It has affinity for free ribosomal 30S subunits but not for 70S ribosomes. This is Ribosome maturation factor RimM from Cutibacterium acnes (strain DSM 16379 / KPA171202) (Propionibacterium acnes).